The chain runs to 368 residues: Phosphate acyltransferase (368 aa).

The protein belongs to the PlsX family. Homodimer. Probably interacts with PlsY.

It is found in the cytoplasm. It carries out the reaction a fatty acyl-[ACP] + phosphate = an acyl phosphate + holo-[ACP]. The protein operates within lipid metabolism; phospholipid metabolism. Catalyzes the reversible formation of acyl-phosphate (acyl-PO(4)) from acyl-[acyl-carrier-protein] (acyl-ACP). This enzyme utilizes acyl-ACP as fatty acyl donor, but not acyl-CoA. The polypeptide is Phosphate acyltransferase (Granulibacter bethesdensis (strain ATCC BAA-1260 / CGDNIH1)).